We begin with the raw amino-acid sequence, 175 residues long: Ribosome maturation factor RimM (175 aa).

One can recognise a PRC barrel domain in the interval 97–170 (NGQYYWTDVL…YLYVDWQMAW (74 aa)).

It belongs to the RimM family. In terms of assembly, binds ribosomal protein uS19.

It localises to the cytoplasm. Its function is as follows. An accessory protein needed during the final step in the assembly of 30S ribosomal subunit, possibly for assembly of the head region. Essential for efficient processing of 16S rRNA. May be needed both before and after RbfA during the maturation of 16S rRNA. It has affinity for free ribosomal 30S subunits but not for 70S ribosomes. The polypeptide is Ribosome maturation factor RimM (Dichelobacter nodosus (strain VCS1703A)).